A 759-amino-acid chain; its full sequence is Protein YdeP (759 aa).

Residues C49 and C52 each contribute to the [4Fe-4S] cluster site.

It belongs to the prokaryotic molybdopterin-containing oxidoreductase family. The cofactor is [4Fe-4S] cluster. It depends on Mo-bis(molybdopterin guanine dinucleotide) as a cofactor.

Its function is as follows. Probably involved in acid resistance. The sequence is that of Protein YdeP (ydeP) from Shigella flexneri.